We begin with the raw amino-acid sequence, 571 residues long: L-erythrulose 1-kinase (571 aa).

Positions 7–331 constitute a DhaK domain; sequence SPDDFADEAV…WTAPVETPAY (325 aa). H217 serves as the catalytic Tele-hemiaminal-histidine intermediate. The DhaL domain occupies 367–567; sequence RNIVAVLETF…FAMLMKALGE (201 aa). Residues 396 to 402, 442 to 443, G484, R539, and 552 to 554 contribute to the ATP site; these read DGDHGQG, TS, and DPG.

The enzyme catalyses L-erythrulose + ATP = L-erythrulose 1-phosphate + ADP + H(+). It participates in carbohydrate metabolism; L-threitol degradation. Its function is as follows. Kinase that has a preference for L-erythrulose, producing L-erythrulose-1P. Involved in the degradation pathway of L-threitol, that allows M.smegmatis to grow on this compound as the sole carbon source. Is also able to phosphorylate D-erythrulose and dihydroxyacetone in vitro. In Mycolicibacterium smegmatis (strain ATCC 700084 / mc(2)155) (Mycobacterium smegmatis), this protein is L-erythrulose 1-kinase.